A 476-amino-acid chain; its full sequence is Endonuclease SceI small subunit (476 aa).

Belongs to the LAGLIDADG endonuclease family. In terms of assembly, endonuclease SceI (Endo.SceI) is a heterodimer of ENS2 and SSC1. The N-terminus is blocked.

Its subcellular location is the mitochondrion. Functionally, catalytic component of endonuclease SceI (Endo.SceI), which cleaves specifically at multiple sites on mitochondrial DNA and produces double-stranded breaks. The polypeptide is Endonuclease SceI small subunit (ENS2) (Saccharomyces cerevisiae (Baker's yeast)).